Consider the following 177-residue polypeptide: Large ribosomal subunit protein uL6 (177 aa).

This sequence belongs to the universal ribosomal protein uL6 family. In terms of assembly, part of the 50S ribosomal subunit.

In terms of biological role, this protein binds to the 23S rRNA, and is important in its secondary structure. It is located near the subunit interface in the base of the L7/L12 stalk, and near the tRNA binding site of the peptidyltransferase center. The polypeptide is Large ribosomal subunit protein uL6 (Latilactobacillus sakei subsp. sakei (strain 23K) (Lactobacillus sakei subsp. sakei)).